The following is a 512-amino-acid chain: Probable metalloreductase AIM14 (512 aa).

Helical transmembrane passes span 20–40, 61–81, 97–117, 132–152, 161–181, 191–211, and 218–235; these read IKYGYIVLGFSVVHIIGILIC, PLFISIIAWTLILIGLGVFHV, MSYALLPFDIFLVLRPNSIGL, VIIAGAIIHGVGYFIKWILEG, LWNFLGIVVFMLNLILIIISL, YFYVVHNITVWLFVGLICLHA, and YAIACASLLGLQIFERYA. Residues 94-206 enclose the Ferric oxidoreductase domain; sequence FGRMSYALLP…NITVWLFVGL (113 aa). Residues 230 to 355 form the FAD-binding FR-type domain; the sequence is IFERYAKSHS…GGSGISFALP (126 aa). Over residues 427–436 the composition is skewed to low complexity; sequence ESLPSSETPS. The tract at residues 427-451 is disordered; it reads ESLPSSETPSRTVNDDSLSQDTRPK. Residues 437-447 show a composition bias toward polar residues; it reads RTVNDDSLSQD.

Belongs to the ferric reductase (FRE) family. AIM14 subfamily.

It localises to the membrane. Its function is as follows. Probable cell surface metalloreductase. May be involved in iron or copper homeostasis. In Debaryomyces hansenii (strain ATCC 36239 / CBS 767 / BCRC 21394 / JCM 1990 / NBRC 0083 / IGC 2968) (Yeast), this protein is Probable metalloreductase AIM14 (AIM14).